Here is a 565-residue protein sequence, read N- to C-terminus: Sulfite reductase [NADPH] hemoprotein beta-component (565 aa).

The [4Fe-4S] cluster site is built by cysteine 429, cysteine 435, cysteine 474, and cysteine 478. Cysteine 478 provides a ligand contact to siroheme.

The protein belongs to the nitrite and sulfite reductase 4Fe-4S domain family. Alpha(8)-beta(8). The alpha component is a flavoprotein, the beta component is a hemoprotein. Siroheme is required as a cofactor. [4Fe-4S] cluster serves as cofactor.

It catalyses the reaction hydrogen sulfide + 3 NADP(+) + 3 H2O = sulfite + 3 NADPH + 4 H(+). It participates in sulfur metabolism; hydrogen sulfide biosynthesis; hydrogen sulfide from sulfite (NADPH route): step 1/1. Its function is as follows. Component of the sulfite reductase complex that catalyzes the 6-electron reduction of sulfite to sulfide. This is one of several activities required for the biosynthesis of L-cysteine from sulfate. The protein is Sulfite reductase [NADPH] hemoprotein beta-component of Shewanella sp. (strain W3-18-1).